Consider the following 234-residue polypeptide: UPF0441 protein plu3956 (234 aa).

Disordered stretches follow at residues 105–129 (QAGLGTTTSSTSTNGEAQAQQQQSG) and 149–234 (SAPS…SVGG). Residues 110 to 127 (TTTSSTSTNGEAQAQQQQ) show a composition bias toward low complexity. Positions 150 to 175 (APSQPLFSSKSATSPANGQFVDSTGK) are enriched in polar residues. Composition is skewed to low complexity over residues 188–205 (TVPKTAMAPKPATTTTIT) and 216–234 (QSTMQRSASSGSTSRSVGG).

Belongs to the UPF0441 family.

In Photorhabdus laumondii subsp. laumondii (strain DSM 15139 / CIP 105565 / TT01) (Photorhabdus luminescens subsp. laumondii), this protein is UPF0441 protein plu3956.